Consider the following 258-residue polypeptide: Regulatory protein RecX (258 aa).

It belongs to the RecX family.

It is found in the cytoplasm. In terms of biological role, modulates RecA activity. The chain is Regulatory protein RecX from Streptococcus pneumoniae (strain 70585).